Here is a 618-residue protein sequence, read N- to C-terminus: UvrABC system protein C (618 aa).

In terms of domain architecture, GIY-YIG spans 19 to 97 (SEPGIYRMLD…IKALRPKYNV (79 aa)). The UVR domain occupies 208–243 (QIILDALAERMKQAVNQLNFEEAAVLRDQIKNLRLI).

The protein belongs to the UvrC family. As to quaternary structure, interacts with UvrB in an incision complex.

Its subcellular location is the cytoplasm. Its function is as follows. The UvrABC repair system catalyzes the recognition and processing of DNA lesions. UvrC both incises the 5' and 3' sides of the lesion. The N-terminal half is responsible for the 3' incision and the C-terminal half is responsible for the 5' incision. The protein is UvrABC system protein C of Legionella pneumophila (strain Paris).